We begin with the raw amino-acid sequence, 285 residues long: Putative pyruvate, phosphate dikinase regulatory protein (285 aa).

165-172 (GVSRTSKT) provides a ligand contact to ADP.

It belongs to the pyruvate, phosphate/water dikinase regulatory protein family. PDRP subfamily.

It carries out the reaction N(tele)-phospho-L-histidyl/L-threonyl-[pyruvate, phosphate dikinase] + ADP = N(tele)-phospho-L-histidyl/O-phospho-L-threonyl-[pyruvate, phosphate dikinase] + AMP + H(+). The catalysed reaction is N(tele)-phospho-L-histidyl/O-phospho-L-threonyl-[pyruvate, phosphate dikinase] + phosphate + H(+) = N(tele)-phospho-L-histidyl/L-threonyl-[pyruvate, phosphate dikinase] + diphosphate. Its function is as follows. Bifunctional serine/threonine kinase and phosphorylase involved in the regulation of the pyruvate, phosphate dikinase (PPDK) by catalyzing its phosphorylation/dephosphorylation. This Lactobacillus delbrueckii subsp. bulgaricus (strain ATCC BAA-365 / Lb-18) protein is Putative pyruvate, phosphate dikinase regulatory protein.